Reading from the N-terminus, the 208-residue chain is MSNGFQMPTSRYVLPSFIEQSAYGTKETNPYAKLFEERIIFLGTQVDDTSANDIMAQLLVLEGMDPDRDITLYINSPGGSFTALMAIYDTMQYVRPDVQTVCLGQAASAAAVLLAAGAPGKRAVLPNSRVLIHQPATQGTQGQVSDLEIQAAEIERMRRLMETTLAEHTGKTAEQIRIDTDRDKILTAEEALEYGIVDQVFDYRKLKR.

Residue S108 is the Nucleophile of the active site. Residue H133 is part of the active site.

The protein belongs to the peptidase S14 family. In terms of assembly, fourteen ClpP subunits assemble into 2 heptameric rings which stack back to back to give a disk-like structure with a central cavity, resembling the structure of eukaryotic proteasomes.

The protein resides in the cytoplasm. It catalyses the reaction Hydrolysis of proteins to small peptides in the presence of ATP and magnesium. alpha-casein is the usual test substrate. In the absence of ATP, only oligopeptides shorter than five residues are hydrolyzed (such as succinyl-Leu-Tyr-|-NHMec, and Leu-Tyr-Leu-|-Tyr-Trp, in which cleavage of the -Tyr-|-Leu- and -Tyr-|-Trp bonds also occurs).. Its function is as follows. Cleaves peptides in various proteins in a process that requires ATP hydrolysis. Has a chymotrypsin-like activity. Plays a major role in the degradation of misfolded proteins. The chain is ATP-dependent Clp protease proteolytic subunit 1 from Corynebacterium glutamicum (strain ATCC 13032 / DSM 20300 / JCM 1318 / BCRC 11384 / CCUG 27702 / LMG 3730 / NBRC 12168 / NCIMB 10025 / NRRL B-2784 / 534).